The following is a 529-amino-acid chain: UDP-glucuronosyltransferase 2B33 (529 aa).

An N-terminal signal peptide occupies residues 1-24; that stretch reads MSVKWTSIILLIQLSFYFSSGSCG. 2 N-linked (GlcNAc...) asparagine glycosylation sites follow: N67 and N68. Residues 494 to 514 traverse the membrane as a helical segment; the sequence is IGFLLACVATVIFIIMKCCLF.

It belongs to the UDP-glycosyltransferase family.

The protein localises to the microsome membrane. It localises to the endoplasmic reticulum membrane. It catalyses the reaction glucuronate acceptor + UDP-alpha-D-glucuronate = acceptor beta-D-glucuronoside + UDP + H(+). Its function is as follows. UDPGTs are of major importance in the conjugation and subsequent elimination of potentially toxic xenobiotics and endogenous compounds. This isozyme has glucuronidating capacity on estriol and does not catalyze the glucuronidation of beta-estradiol. Capable of conjugating 4-hydroxyestrone, androsterone, diclofenac, and hyodeoxycholic acid. This is UDP-glucuronosyltransferase 2B33 (UGT2B33) from Macaca mulatta (Rhesus macaque).